Here is a 548-residue protein sequence, read N- to C-terminus: Formyltransferase/hydrolase complex Fhc subunit A (548 aa).

Zn(2+)-binding residues include His57, His59, and His227.

The protein belongs to the metallo-dependent hydrolases superfamily. FwdA/FmdA family. In terms of assembly, octaheteromer. Part of the formyltransferase/hydrolase complex fhc; composed of FhcA, FhcB, FhcC and FhcD. Zn(2+) serves as cofactor.

Its subcellular location is the cytoplasm. The catalysed reaction is N-formylmethanofuran + H2O = methanofuran + formate. It participates in one-carbon metabolism; formaldehyde degradation; formate from formaldehyde (H(4)MPT route): step 4/5. Functionally, involved in the transformation of 5-formyl tetrahydromethanopterin (5-formyl-H(4)MPT) to methanofuran (MFR) and formate via the formylmethanofuran (formyl-MFR). May be catalyze the hydrolysis of formylmethanofuran (formyl-MFR) to yield formate and MFR. In Methylorubrum extorquens (strain ATCC 14718 / DSM 1338 / JCM 2805 / NCIMB 9133 / AM1) (Methylobacterium extorquens), this protein is Formyltransferase/hydrolase complex Fhc subunit A (fhcA).